A 93-amino-acid chain; its full sequence is DNA/RNA-binding protein Alba (93 aa).

At K11 the chain carries N6-acetyllysine.

The protein belongs to the histone-like Alba family. Acetylated. Acetylation at Lys-11 decreases DNA-binding affinity.

It localises to the cytoplasm. The protein resides in the chromosome. In terms of biological role, binds double-stranded DNA tightly but without sequence specificity. Involved in DNA compaction. The protein is DNA/RNA-binding protein Alba of Pyrococcus abyssi (strain GE5 / Orsay).